The following is a 222-amino-acid chain: Glutathione S-transferase alpha-2 (222 aa).

Residues 3–83 (GKPVLHYFNA…YIATKYDLYG (81 aa)) enclose the GST N-terminal domain. Lys-4 is modified (N6-succinyllysine). Residues Tyr-9, Lys-45, 54 to 55 (QV), and 67 to 68 (QT) each bind glutathione. Residues 85-208 (DMKERALIDM…QPGSQRKPAM (124 aa)) enclose the GST C-terminal domain.

It belongs to the GST superfamily. Alpha family. Homodimer or heterodimer of GSTA1 and GSTA2.

The protein resides in the cytoplasm. The catalysed reaction is RX + glutathione = an S-substituted glutathione + a halide anion + H(+). Its function is as follows. Catalyzes the conjugation of glutathione to a large variety of electrophilic compounds. This Rattus norvegicus (Rat) protein is Glutathione S-transferase alpha-2 (Gsta2).